Reading from the N-terminus, the 213-residue chain is Putative 3-methyladenine DNA glycosylase (213 aa).

It belongs to the DNA glycosylase MPG family.

The chain is Putative 3-methyladenine DNA glycosylase from Corynebacterium jeikeium (strain K411).